We begin with the raw amino-acid sequence, 284 residues long: tRNA (guanine-N(7)-)-methyltransferase (284 aa).

S-adenosyl-L-methionine contacts are provided by residues glycine 102, 125 to 126 (EI), 160 to 161 (NT), and cysteine 180. Residue aspartate 183 is part of the active site. S-adenosyl-L-methionine is bound at residue 258 to 260 (TEE).

The protein belongs to the class I-like SAM-binding methyltransferase superfamily. TrmB family. As to quaternary structure, forms a complex with TRM82.

Its subcellular location is the nucleus. The catalysed reaction is guanosine(46) in tRNA + S-adenosyl-L-methionine = N(7)-methylguanosine(46) in tRNA + S-adenosyl-L-homocysteine. Its pathway is tRNA modification; N(7)-methylguanine-tRNA biosynthesis. Catalyzes the formation of N(7)-methylguanine at position 46 (m7G46) in tRNA. The polypeptide is tRNA (guanine-N(7)-)-methyltransferase (Podospora anserina (strain S / ATCC MYA-4624 / DSM 980 / FGSC 10383) (Pleurage anserina)).